Here is a 286-residue protein sequence, read N- to C-terminus: NADH-cytochrome b5 reductase 1 (286 aa).

Residues 6 to 26 form a helical membrane-spanning segment; it reads FILVIIGSVALAAGVKYVFTL. Residues 52 to 155 form the FAD-binding FR-type domain; sequence QEYRKFQLKE…KGPKGKFNYQ (104 aa). Residues 135 to 150 and 161 to 193 each bind FAD; these read DNMF…GPKG and SIGM…EISL.

The protein belongs to the flavoprotein pyridine nucleotide cytochrome reductase family. In terms of assembly, monomer. FAD is required as a cofactor.

The protein localises to the endoplasmic reticulum membrane. The protein resides in the mitochondrion outer membrane. The enzyme catalyses 2 Fe(III)-[cytochrome b5] + NADH = 2 Fe(II)-[cytochrome b5] + NAD(+) + H(+). Its function is as follows. Electron donor reductase for cytochrome b5. The cytochrome b5/NADH cytochrome b5 reductase electron transfer system supports the catalytic activity of several sterol biosynthetic enzymes. The chain is NADH-cytochrome b5 reductase 1 (cyb5r1) from Dictyostelium discoideum (Social amoeba).